Consider the following 139-residue polypeptide: Large ribosomal subunit protein uL16 (139 aa).

The span at 1 to 17 (MLMPKRVKYRKSQRGRM) shows a compositional bias: basic residues. Residues 1 to 24 (MLMPKRVKYRKSQRGRMKGNSGRG) are disordered.

The protein belongs to the universal ribosomal protein uL16 family. Part of the 50S ribosomal subunit.

Binds 23S rRNA and is also seen to make contacts with the A and possibly P site tRNAs. The polypeptide is Large ribosomal subunit protein uL16 (Chlorobium limicola (strain DSM 245 / NBRC 103803 / 6330)).